A 287-amino-acid polypeptide reads, in one-letter code: Energy-coupling factor transporter ATP-binding protein EcfA1 (287 aa).

Residues 6-248 (IVAEGVSYAY…ADRIRALRLD (243 aa)) enclose the ABC transporter domain. Residue 47 to 54 (GMNGSGKS) participates in ATP binding.

This sequence belongs to the ABC transporter superfamily. Energy-coupling factor EcfA family. Forms a stable energy-coupling factor (ECF) transporter complex composed of 2 membrane-embedded substrate-binding proteins (S component), 2 ATP-binding proteins (A component) and 2 transmembrane proteins (T component).

Its subcellular location is the cell membrane. Its function is as follows. ATP-binding (A) component of a common energy-coupling factor (ECF) ABC-transporter complex. Unlike classic ABC transporters this ECF transporter provides the energy necessary to transport a number of different substrates. The sequence is that of Energy-coupling factor transporter ATP-binding protein EcfA1 from Symbiobacterium thermophilum (strain DSM 24528 / JCM 14929 / IAM 14863 / T).